A 380-amino-acid chain; its full sequence is Putative 8-amino-7-oxononanoate synthase (380 aa).

Arginine 18 contacts substrate. Residue 106–107 (GY) coordinates pyridoxal 5'-phosphate. A substrate-binding site is contributed by histidine 131. Pyridoxal 5'-phosphate is bound by residues serine 179, 205–208 (DEAH), and 236–239 (TFGK). Lysine 239 carries the post-translational modification N6-(pyridoxal phosphate)lysine. A substrate-binding site is contributed by threonine 352.

Belongs to the class-II pyridoxal-phosphate-dependent aminotransferase family. BioF subfamily. Homodimer. The cofactor is pyridoxal 5'-phosphate.

The enzyme catalyses 6-carboxyhexanoyl-[ACP] + L-alanine + H(+) = (8S)-8-amino-7-oxononanoate + holo-[ACP] + CO2. Its pathway is cofactor biosynthesis; biotin biosynthesis. Functionally, catalyzes the decarboxylative condensation of pimeloyl-[acyl-carrier protein] and L-alanine to produce 8-amino-7-oxononanoate (AON), [acyl-carrier protein], and carbon dioxide. The polypeptide is Putative 8-amino-7-oxononanoate synthase (bioF) (Neisseria meningitidis serogroup C (strain 053442)).